A 64-amino-acid polypeptide reads, in one-letter code: Probable cytochrome c oxidase subunit 5C-1 (64 aa).

A helical membrane pass occupies residues 15–34; that stretch reads SVVKELFIGLALGLAAGGLW.

Belongs to the cytochrome c oxidase subunit 5C family.

It localises to the mitochondrion inner membrane. Its function is as follows. This protein is one of the nuclear-coded polypeptide chains of cytochrome c oxidase, the terminal oxidase in mitochondrial electron transport. This chain is Probable cytochrome c oxidase subunit 5C-1, found in Arabidopsis thaliana (Mouse-ear cress).